Here is a 206-residue protein sequence, read N- to C-terminus: MARYLGPKLKLSRREGTDLFLKSGVRAIDSKCKLETAPGQHGARKGRLSDYGLQLREKQKVRRIYGVLEKQFRNYYKEAARLKGNTGENLLQLLEQRLDNVVYRMGFASTRAEARQLVSHKAILVNGRVVNVPSYVIAPEDTVVIREKSKTQARIIAALELAEQREKPTWVEVDGKKLEGSFKRLPERSDLSADINEQLIVELYSK.

Residues 96 to 156 (QRLDNVVYRM…EKSKTQARII (61 aa)) form the S4 RNA-binding domain.

The protein belongs to the universal ribosomal protein uS4 family. Part of the 30S ribosomal subunit. Contacts protein S5. The interaction surface between S4 and S5 is involved in control of translational fidelity.

One of the primary rRNA binding proteins, it binds directly to 16S rRNA where it nucleates assembly of the body of the 30S subunit. In terms of biological role, with S5 and S12 plays an important role in translational accuracy. The chain is Small ribosomal subunit protein uS4 from Pseudoalteromonas translucida (strain TAC 125).